The sequence spans 289 residues: ATP synthase gamma chain (289 aa).

The protein belongs to the ATPase gamma chain family. As to quaternary structure, F-type ATPases have 2 components, CF(1) - the catalytic core - and CF(0) - the membrane proton channel. CF(1) has five subunits: alpha(3), beta(3), gamma(1), delta(1), epsilon(1). CF(0) has three main subunits: a, b and c.

Its subcellular location is the cell inner membrane. Its function is as follows. Produces ATP from ADP in the presence of a proton gradient across the membrane. The gamma chain is believed to be important in regulating ATPase activity and the flow of protons through the CF(0) complex. The protein is ATP synthase gamma chain of Haemophilus influenzae (strain 86-028NP).